A 399-amino-acid polypeptide reads, in one-letter code: Methylthioribose kinase (399 aa).

ATP-binding positions include N40, K57, and 111-113 (EDL). D229 contacts substrate. 246 to 248 (DAE) is a binding site for ATP. R344 serves as a coordination point for substrate.

Belongs to the methylthioribose kinase family. As to quaternary structure, homodimer.

It catalyses the reaction 5-(methylsulfanyl)-D-ribose + ATP = 5-(methylsulfanyl)-alpha-D-ribose 1-phosphate + ADP + H(+). Its pathway is amino-acid biosynthesis; L-methionine biosynthesis via salvage pathway; S-methyl-5-thio-alpha-D-ribose 1-phosphate from S-methyl-5'-thioadenosine (hydrolase route): step 2/2. Catalyzes the phosphorylation of methylthioribose into methylthioribose-1-phosphate. This Cronobacter sakazakii (strain ATCC BAA-894) (Enterobacter sakazakii) protein is Methylthioribose kinase.